A 335-amino-acid polypeptide reads, in one-letter code: Methionine import ATP-binding protein MetN (335 aa).

The ABC transporter domain maps to Ile-2–Val-241. Gly-38–Ser-45 contacts ATP.

The protein belongs to the ABC transporter superfamily. Methionine importer (TC 3.A.1.24) family. The complex is composed of two ATP-binding proteins (MetN), two transmembrane proteins (MetI) and a solute-binding protein (MetQ).

The protein localises to the cell inner membrane. The enzyme catalyses L-methionine(out) + ATP + H2O = L-methionine(in) + ADP + phosphate + H(+). It carries out the reaction D-methionine(out) + ATP + H2O = D-methionine(in) + ADP + phosphate + H(+). Functionally, part of the ABC transporter complex MetNIQ involved in methionine import. Responsible for energy coupling to the transport system. This Xanthomonas euvesicatoria pv. vesicatoria (strain 85-10) (Xanthomonas campestris pv. vesicatoria) protein is Methionine import ATP-binding protein MetN.